Reading from the N-terminus, the 143-residue chain is Large ribosomal subunit protein uL11 (143 aa).

The protein belongs to the universal ribosomal protein uL11 family. In terms of assembly, part of the ribosomal stalk of the 50S ribosomal subunit. Interacts with L10 and the large rRNA to form the base of the stalk. L10 forms an elongated spine to which L12 dimers bind in a sequential fashion forming a multimeric L10(L12)X complex. In terms of processing, one or more lysine residues are methylated.

Functionally, forms part of the ribosomal stalk which helps the ribosome interact with GTP-bound translation factors. The chain is Large ribosomal subunit protein uL11 from Rhizobium etli (strain ATCC 51251 / DSM 11541 / JCM 21823 / NBRC 15573 / CFN 42).